A 448-amino-acid polypeptide reads, in one-letter code: NADH oxidase (448 aa).

Residues 7 to 11 (GSGAA), cysteine 42, valine 80, 110 to 113 (ATGA), and arginine 132 contribute to the FAD site. Catalysis depends on cysteine 42, which acts as the Redox-active. Residues 152–167 (VAVV…MAYG), glutamate 179, and glycine 243 contribute to the NAD(+) site. FAD contacts are provided by residues 271 to 281 (TSIPNIYAVGD), glycine 299, and threonine 300. Valine 328 is a binding site for NAD(+). Tyrosine 423 serves as a coordination point for FAD.

This sequence belongs to the class-III pyridine nucleotide-disulfide oxidoreductase family. FAD is required as a cofactor.

The enzyme catalyses 2 NADH + O2 + 2 H(+) = 2 NAD(+) + 2 H2O. Its function is as follows. Catalyzes the four-electron reduction of molecular oxygen to water. This Methanocaldococcus jannaschii (strain ATCC 43067 / DSM 2661 / JAL-1 / JCM 10045 / NBRC 100440) (Methanococcus jannaschii) protein is NADH oxidase.